The primary structure comprises 89 residues: Small ribosomal subunit protein uS15 (89 aa).

This sequence belongs to the universal ribosomal protein uS15 family. Part of the 30S ribosomal subunit. Forms a bridge to the 50S subunit in the 70S ribosome, contacting the 23S rRNA.

Functionally, one of the primary rRNA binding proteins, it binds directly to 16S rRNA where it helps nucleate assembly of the platform of the 30S subunit by binding and bridging several RNA helices of the 16S rRNA. In terms of biological role, forms an intersubunit bridge (bridge B4) with the 23S rRNA of the 50S subunit in the ribosome. This Azorhizobium caulinodans (strain ATCC 43989 / DSM 5975 / JCM 20966 / LMG 6465 / NBRC 14845 / NCIMB 13405 / ORS 571) protein is Small ribosomal subunit protein uS15.